A 469-amino-acid polypeptide reads, in one-letter code: MSAVNTPAGFSDFKVADISLADWGRKEVIIAESEMPALMGLRRKYQAEQPLKGAKIIGCIHMTIQTAVLIETLVALGAEVRWSSCNIFSTQDQAAAAIAAAGIPVFAWKGETEQEYEWCIEQTILKDGQPWDANMVLDDGGDLTEILHKKYPAMLEKIHGVTEETTTGVHRLLDMLAKGELKVPAINVNDSVTKSKNDNKYGCRHSLNDAIKRGTDHLLSGKQALVIGYGDVGKGSAQSLRQEGMIVKVTEVDPICAMQACMDGFEVVSPFKDGINTGTEAGINKDLLGRIDLIVTTTGNVNVCDANMLKALKKRAVVCNIGHFDNEIDTAFMRKHWAWEEVKPQVHKIHRTGAGTFDPQNDDYLILLAEGRLVNLGNATGHPSRIMDGSFANQVLAQIFLFEQKFAELPAAKKAERLTVEVLPKKLDEEVALEMVRGFGGVVTQLTPQQAEYIGVTVEGPFKPDAYRY.

3 residues coordinate substrate: Thr-63, Asp-139, and Glu-164. 165-167 lines the NAD(+) pocket; sequence TTT. Substrate-binding residues include Lys-194 and Asp-198. NAD(+)-binding positions include Asn-199, 228–233, Glu-251, Asn-300, 321–323, and Asn-375; these read GYGDVG and IGH.

Belongs to the adenosylhomocysteinase family. NAD(+) is required as a cofactor.

The protein localises to the cytoplasm. It catalyses the reaction S-adenosyl-L-homocysteine + H2O = L-homocysteine + adenosine. It functions in the pathway amino-acid biosynthesis; L-homocysteine biosynthesis; L-homocysteine from S-adenosyl-L-homocysteine: step 1/1. Its function is as follows. May play a key role in the regulation of the intracellular concentration of adenosylhomocysteine. This Pseudomonas entomophila (strain L48) protein is Adenosylhomocysteinase.